The primary structure comprises 442 residues: tRNA modification GTPase MnmE (442 aa).

The (6S)-5-formyl-5,6,7,8-tetrahydrofolate site is built by Arg27, Glu84, and Lys124. Residues Gly221–Glu366 enclose the TrmE-type G domain. Residues Asn231–Ser236, Ser250–Thr256, and Asp275–Gly278 each bind GTP. Ser235 and Thr256 together coordinate Mg(2+). (6S)-5-formyl-5,6,7,8-tetrahydrofolate is bound at residue Lys442.

The protein belongs to the TRAFAC class TrmE-Era-EngA-EngB-Septin-like GTPase superfamily. TrmE GTPase family. Homodimer. Heterotetramer of two MnmE and two MnmG subunits. K(+) is required as a cofactor.

Its subcellular location is the cytoplasm. Its function is as follows. Exhibits a very high intrinsic GTPase hydrolysis rate. Involved in the addition of a carboxymethylaminomethyl (cmnm) group at the wobble position (U34) of certain tRNAs, forming tRNA-cmnm(5)s(2)U34. The chain is tRNA modification GTPase MnmE from Brucella canis (strain ATCC 23365 / NCTC 10854 / RM-666).